The following is a 120-amino-acid chain: Large ribosomal subunit protein bL19c (120 aa).

It belongs to the bacterial ribosomal protein bL19 family.

Its subcellular location is the plastid. The protein resides in the chloroplast. The sequence is that of Large ribosomal subunit protein bL19c from Thalassiosira weissflogii (Marine diatom).